The primary structure comprises 255 residues: Geranylgeranylglyceryl phosphate synthase (255 aa).

Mg(2+) contacts are provided by Asp-34 and Thr-64. Residues 182 to 188 (YLEAGSG), 213 to 214 (GG), and 235 to 236 (GN) each bind sn-glycerol 1-phosphate.

This sequence belongs to the GGGP/HepGP synthase family. Group II subfamily. Mg(2+) is required as a cofactor.

It localises to the cytoplasm. It catalyses the reaction sn-glycerol 1-phosphate + (2E,6E,10E)-geranylgeranyl diphosphate = sn-3-O-(geranylgeranyl)glycerol 1-phosphate + diphosphate. Its pathway is membrane lipid metabolism; glycerophospholipid metabolism. In terms of biological role, prenyltransferase that catalyzes the transfer of the geranylgeranyl moiety of geranylgeranyl diphosphate (GGPP) to the C3 hydroxyl of sn-glycerol-1-phosphate (G1P). This reaction is the first ether-bond-formation step in the biosynthesis of archaeal membrane lipids. This Saccharolobus islandicus (strain M.16.27) (Sulfolobus islandicus) protein is Geranylgeranylglyceryl phosphate synthase.